Consider the following 750-residue polypeptide: 1,4-alpha-glucan branching enzyme GlgB (750 aa).

The active-site Nucleophile is the Asp-425. Glu-478 acts as the Proton donor in catalysis.

This sequence belongs to the glycosyl hydrolase 13 family. GlgB subfamily. Monomer.

It carries out the reaction Transfers a segment of a (1-&gt;4)-alpha-D-glucan chain to a primary hydroxy group in a similar glucan chain.. Its pathway is glycan biosynthesis; glycogen biosynthesis. Functionally, catalyzes the formation of the alpha-1,6-glucosidic linkages in glycogen by scission of a 1,4-alpha-linked oligosaccharide from growing alpha-1,4-glucan chains and the subsequent attachment of the oligosaccharide to the alpha-1,6 position. The polypeptide is 1,4-alpha-glucan branching enzyme GlgB (Cupriavidus pinatubonensis (strain JMP 134 / LMG 1197) (Cupriavidus necator (strain JMP 134))).